A 539-amino-acid chain; its full sequence is MKFDPESIKKAAKEDFDSAWTSGKDLIKKTGLNQQYPHTSFHFGKAHPVYDTIAKLREAYLRMGFDEMMNPLIVDEKEVYKQFGHEALAVLDRCYYLAGLPRPNVGISDQRIAKIKEMLGGIDDEGIETIRKVLHSYKKGEVEGDDLVPEIALKLNVSDALVVEMIDKVFPEFKELTPQATTKTLRSHMTSGWFISLSGILERSRPPFHLFSIDRSFRREQQEDASRLMTYYSASCVIMDEDVTVDHGKAVAQGLLAQFGFEKFMFRPDEKRSKYYVPDTQIEVFAYHPKLVGSNTKYSDGWIEIATFGIYSPTALAEYNIPCPVMNLGLGVERLAMILHDSTDLRGMTYPQLPQYAEWELKDNELARMIFVDKLPETPEGQEILEGIVMQCDMHGSEPSPCEFVAWEGILKGKKVKVSVIEPEEDTKLCGPAAYNEVLVHENDVLGLPNNKKWKKAFENHSARTGVRFIEAFAAQAAKEIEEAVEKGEKECETRVRIVKVPSEINIKLDPLAQRYITGKKQKIDIRGPVFTTVRAEIE.

Residues 188 to 190 (HMT), 233 to 235 (SAS), 275 to 276 (YY), and Asn-327 contribute to the substrate site.

This sequence belongs to the class-II aminoacyl-tRNA synthetase family. O-phosphoseryl-tRNA(Cys) synthetase subfamily. As to quaternary structure, homotetramer. Interacts with SepCysS.

The catalysed reaction is tRNA(Cys) + O-phospho-L-serine + ATP = O-phospho-L-seryl-tRNA(Cys) + AMP + diphosphate. Functionally, catalyzes the attachment of O-phosphoserine (Sep) to tRNA(Cys). The sequence is that of O-phosphoserine--tRNA(Cys) ligase from Methanococcoides burtonii (strain DSM 6242 / NBRC 107633 / OCM 468 / ACE-M).